The primary structure comprises 535 residues: Phosphoenolpyruvate carboxykinase (ATP) (535 aa).

The substrate site is built by R59, Y201, and K207. Residues K207, H226, and 243 to 251 (GLSGTGKTT) each bind ATP. Mn(2+)-binding residues include K207 and H226. A Mn(2+)-binding site is contributed by D264. Residues E292, R328, 444-445 (RI), and T450 contribute to the ATP site. Position 328 (R328) interacts with substrate.

It belongs to the phosphoenolpyruvate carboxykinase (ATP) family. Mn(2+) serves as cofactor.

It is found in the cytoplasm. The enzyme catalyses oxaloacetate + ATP = phosphoenolpyruvate + ADP + CO2. It participates in carbohydrate biosynthesis; gluconeogenesis. Involved in the gluconeogenesis. Catalyzes the conversion of oxaloacetate (OAA) to phosphoenolpyruvate (PEP) through direct phosphoryl transfer between the nucleoside triphosphate and OAA. The protein is Phosphoenolpyruvate carboxykinase (ATP) of Bacteroides fragilis (strain ATCC 25285 / DSM 2151 / CCUG 4856 / JCM 11019 / LMG 10263 / NCTC 9343 / Onslow / VPI 2553 / EN-2).